The primary structure comprises 107 residues: Large ribosomal subunit protein bL21 (107 aa).

It belongs to the bacterial ribosomal protein bL21 family. As to quaternary structure, part of the 50S ribosomal subunit. Contacts protein L20.

This protein binds to 23S rRNA in the presence of protein L20. The sequence is that of Large ribosomal subunit protein bL21 from Pseudothermotoga lettingae (strain ATCC BAA-301 / DSM 14385 / NBRC 107922 / TMO) (Thermotoga lettingae).